Consider the following 198-residue polypeptide: Peptidyl-tRNA hydrolase (198 aa).

Y15 lines the tRNA pocket. H20 acts as the Proton acceptor in catalysis. TRNA is bound by residues F66, N68, and N114.

Belongs to the PTH family. In terms of assembly, monomer.

Its subcellular location is the cytoplasm. The enzyme catalyses an N-acyl-L-alpha-aminoacyl-tRNA + H2O = an N-acyl-L-amino acid + a tRNA + H(+). Hydrolyzes ribosome-free peptidyl-tRNAs (with 1 or more amino acids incorporated), which drop off the ribosome during protein synthesis, or as a result of ribosome stalling. In terms of biological role, catalyzes the release of premature peptidyl moieties from peptidyl-tRNA molecules trapped in stalled 50S ribosomal subunits, and thus maintains levels of free tRNAs and 50S ribosomes. The chain is Peptidyl-tRNA hydrolase from Cupriavidus necator (strain ATCC 17699 / DSM 428 / KCTC 22496 / NCIMB 10442 / H16 / Stanier 337) (Ralstonia eutropha).